A 253-amino-acid polypeptide reads, in one-letter code: uncharacterized protein (253 aa).

Ser-145 contacts substrate. Tyr-159 acts as the Proton acceptor in catalysis.

Belongs to the short-chain dehydrogenases/reductases (SDR) family.

This is an uncharacterized protein from Mycobacterium tuberculosis (strain CDC 1551 / Oshkosh).